Reading from the N-terminus, the 297-residue chain is Thiosulfate sulfurtransferase (297 aa).

The residue at position 14 (lysine 14) is an N6-acetyllysine; alternate. Lysine 14 is modified (N6-succinyllysine; alternate). Positions 25 to 143 (LGPGLRVLDA…WLKEGHPVTS (119 aa)) constitute a Rhodanese 1 domain. Serine 35 is a glycosylation site (O-linked (GlcNAc) serine). Serine 38 is subject to Phosphoserine. Residue lysine 136 is modified to N6-acetyllysine; alternate. Lysine 136 is modified (N6-succinyllysine; alternate). Residues 144–159 (EPSRPEPAVFKATLDR) are hinge. An N6-acetyllysine modification is found at lysine 163. Residues 173 to 288 (QSKRFQLVDS…WFHQAPPETR (116 aa)) form the Rhodanese 2 domain. An N6-acetyllysine; alternate modification is found at lysine 175. Lysine 175 carries the N6-succinyllysine; alternate modification. Arginine 187 lines the substrate pocket. N6-acetyllysine; alternate is present on lysine 224. Lysine 224 is subject to N6-succinyllysine; alternate. Lysine 236 carries the N6-acetyllysine modification. The residue at position 237 (lysine 237) is an N6-acetyllysine; alternate. Residue lysine 237 is modified to N6-succinyllysine; alternate. The active-site Cysteine persulfide intermediate is cysteine 248. Residue lysine 250 participates in substrate binding.

Monomer.

The protein localises to the mitochondrion matrix. The catalysed reaction is thiosulfate + hydrogen cyanide = thiocyanate + sulfite + 2 H(+). In terms of biological role, together with MRPL18, acts as a mitochondrial import factor for the cytosolic 5S rRNA. Only the nascent unfolded cytoplasmic form is able to bind to the 5S rRNA. Formation of iron-sulfur complexes and cyanide detoxification. Binds molecular oxygen and sulfur. The protein is Thiosulfate sulfurtransferase (TST) of Cricetulus griseus (Chinese hamster).